Here is a 120-residue protein sequence, read N- to C-terminus: MLNLDNQKAIDNLHQSFIKSDLPKIQIGDTLKLGIKIIEGNKERVQFYEGTVIAKKNSSINTTITVRKVLQGIGIERIFLIHSPKVASIEVIRHAKVRRSKLYYLRNLRGKASRLKQRFE.

The protein belongs to the bacterial ribosomal protein bL19 family.

Its subcellular location is the plastid. The protein resides in the chloroplast. This is Large ribosomal subunit protein bL19c from Thalassiosira pseudonana (Marine diatom).